Consider the following 387-residue polypeptide: Mannitol-1-phosphate 5-dehydrogenase (387 aa).

3-14 lines the NAD(+) pocket; the sequence is ALHFGAGNIGRG.

This sequence belongs to the mannitol dehydrogenase family.

The enzyme catalyses D-mannitol 1-phosphate + NAD(+) = beta-D-fructose 6-phosphate + NADH + H(+). The chain is Mannitol-1-phosphate 5-dehydrogenase from Yersinia pseudotuberculosis serotype IB (strain PB1/+).